The following is a 286-amino-acid chain: Urease accessory protein UreD (286 aa).

This sequence belongs to the UreD family. In terms of assembly, ureD, UreF and UreG form a complex that acts as a GTP-hydrolysis-dependent molecular chaperone, activating the urease apoprotein by helping to assemble the nickel containing metallocenter of UreC. The UreE protein probably delivers the nickel.

It localises to the cytoplasm. Required for maturation of urease via the functional incorporation of the urease nickel metallocenter. This is Urease accessory protein UreD from Rhodopseudomonas palustris (strain BisA53).